The following is a 101-amino-acid chain: Small ribosomal subunit protein bS18c (101 aa).

It belongs to the bacterial ribosomal protein bS18 family. Part of the 30S ribosomal subunit.

It is found in the plastid. Its subcellular location is the chloroplast. The sequence is that of Small ribosomal subunit protein bS18c from Lactuca sativa (Garden lettuce).